We begin with the raw amino-acid sequence, 505 residues long: Probable Xaa-Pro aminopeptidase Pc16g13390 (505 aa).

The Mn(2+) site is built by Asp287, Asp298, Glu436, and Glu475.

The protein belongs to the peptidase M24B family. The cofactor is Mn(2+).

It catalyses the reaction Release of any N-terminal amino acid, including proline, that is linked to proline, even from a dipeptide or tripeptide.. Functionally, catalyzes the removal of a penultimate prolyl residue from the N-termini of peptides. The sequence is that of Probable Xaa-Pro aminopeptidase Pc16g13390 from Penicillium rubens (strain ATCC 28089 / DSM 1075 / NRRL 1951 / Wisconsin 54-1255) (Penicillium chrysogenum).